The chain runs to 637 residues: 1-deoxy-D-xylulose-5-phosphate synthase (637 aa).

Thiamine diphosphate contacts are provided by residues His75 and 116 to 118 (AHS). Mg(2+) is bound at residue Asp147. Residues 148 to 149 (GA), Asn177, Tyr288, and Glu370 each bind thiamine diphosphate. Residue Asn177 participates in Mg(2+) binding.

Belongs to the transketolase family. DXPS subfamily. In terms of assembly, homodimer. Mg(2+) is required as a cofactor. It depends on thiamine diphosphate as a cofactor.

The catalysed reaction is D-glyceraldehyde 3-phosphate + pyruvate + H(+) = 1-deoxy-D-xylulose 5-phosphate + CO2. Its pathway is metabolic intermediate biosynthesis; 1-deoxy-D-xylulose 5-phosphate biosynthesis; 1-deoxy-D-xylulose 5-phosphate from D-glyceraldehyde 3-phosphate and pyruvate: step 1/1. Functionally, catalyzes the acyloin condensation reaction between C atoms 2 and 3 of pyruvate and glyceraldehyde 3-phosphate to yield 1-deoxy-D-xylulose-5-phosphate (DXP). This is 1-deoxy-D-xylulose-5-phosphate synthase from Cupriavidus metallidurans (strain ATCC 43123 / DSM 2839 / NBRC 102507 / CH34) (Ralstonia metallidurans).